The following is a 340-amino-acid chain: Methionine import ATP-binding protein MetN 2 (340 aa).

An ABC transporter domain is found at 2 to 241 (ITLQNVVKEY…PQEKVTQRFV (240 aa)). Residue 38-45 (GYSGAGKS) coordinates ATP.

This sequence belongs to the ABC transporter superfamily. Methionine importer (TC 3.A.1.24) family. As to quaternary structure, the complex is composed of two ATP-binding proteins (MetN), two transmembrane proteins (MetI) and a solute-binding protein (MetQ).

The protein resides in the cell membrane. It catalyses the reaction L-methionine(out) + ATP + H2O = L-methionine(in) + ADP + phosphate + H(+). It carries out the reaction D-methionine(out) + ATP + H2O = D-methionine(in) + ADP + phosphate + H(+). In terms of biological role, part of the ABC transporter complex MetNIQ involved in methionine import. Responsible for energy coupling to the transport system. The sequence is that of Methionine import ATP-binding protein MetN 2 from Listeria monocytogenes serotype 4b (strain F2365).